The sequence spans 353 residues: Phosphate acyltransferase (353 aa).

It belongs to the PlsX family. Homodimer. Probably interacts with PlsY.

It is found in the cytoplasm. It carries out the reaction a fatty acyl-[ACP] + phosphate = an acyl phosphate + holo-[ACP]. It participates in lipid metabolism; phospholipid metabolism. Functionally, catalyzes the reversible formation of acyl-phosphate (acyl-PO(4)) from acyl-[acyl-carrier-protein] (acyl-ACP). This enzyme utilizes acyl-ACP as fatty acyl donor, but not acyl-CoA. The protein is Phosphate acyltransferase of Bradyrhizobium diazoefficiens (strain JCM 10833 / BCRC 13528 / IAM 13628 / NBRC 14792 / USDA 110).